Consider the following 142-residue polypeptide: Protein SprT-like (142 aa).

One can recognise a SprT-like domain in the interval 4-138 (YVKKVSIEDF…FACGYCHGRL (135 aa)). Histidine 62 provides a ligand contact to Zn(2+). Glutamate 63 is an active-site residue. Residue histidine 66 coordinates Zn(2+).

It belongs to the SprT family. Zn(2+) serves as cofactor.

The protein resides in the cytoplasm. The chain is Protein SprT-like from Streptococcus agalactiae serotype Ia (strain ATCC 27591 / A909 / CDC SS700).